Reading from the N-terminus, the 270-residue chain is 5-amino-6-(5-phospho-D-ribitylamino)uracil phosphatase YitU (270 aa).

The Nucleophile role is filled by Asp11. Asp11 provides a ligand contact to Mg(2+). Leu12 is a phosphate binding site. Asp13 serves as a coordination point for Mg(2+). Phosphate is bound by residues Thr45–Gly46 and Lys197. Asp220 contributes to the Mg(2+) binding site. Asn223 provides a ligand contact to phosphate.

It belongs to the HAD-like hydrolase superfamily. Cof family. The cofactor is Mg(2+).

The catalysed reaction is 5-amino-6-(5-phospho-D-ribitylamino)uracil + H2O = 5-amino-6-(D-ribitylamino)uracil + phosphate. It functions in the pathway cofactor biosynthesis; riboflavin biosynthesis; 5-amino-6-(D-ribitylamino)uracil from GTP: step 4/4. Catalyzes the dephosphorylation of the riboflavin precursor 5-amino-6-(5-phospho-D-ribitylamino)uracil and of flavin mononucleotide (FMN) in vitro. This is 5-amino-6-(5-phospho-D-ribitylamino)uracil phosphatase YitU (yitU) from Bacillus subtilis (strain 168).